Consider the following 290-residue polypeptide: MLKTVHQKAGRHTRPVRAWLKLLWQRIDEDNMTTLAGNLAYVSLLSLVPLIAVVFALFAAFPMFSDVSIQLRHFIFANFMPATGDVIQRYIEQFVANSNKMTAVGACGLIVTALLLMYAIDSALNTIWRSKRTRPKVYSFAVYWMILTLGPLLAGVSLAISSYLLSLRWASDLNTVIDNVLHILPLLLSWISFWLLYSIVPTTRVPNRDALVGAFVAALLFEAGKKGFALYITMFPSYQLIYGVLAVIPILFVWVYWTWCIVLLGAEITVTLGEYRKLKQAAEQEEADQP.

Residues 1–43 (MLKTVHQKAGRHTRPVRAWLKLLWQRIDEDNMTTLAGNLAYVS) are Cytoplasmic-facing. A helical membrane pass occupies residues 44 to 64 (LLSLVPLIAVVFALFAAFPMF). Residues 65–103 (SDVSIQLRHFIFANFMPATGDVIQRYIEQFVANSNKMTA) are Periplasmic-facing. The chain crosses the membrane as a helical span at residues 104–124 (VGACGLIVTALLLMYAIDSAL). The Cytoplasmic portion of the chain corresponds to 125–139 (NTIWRSKRTRPKVYS). A helical membrane pass occupies residues 140-160 (FAVYWMILTLGPLLAGVSLAI). The Periplasmic segment spans residues 161 to 179 (SSYLLSLRWASDLNTVIDN). Residues 180–200 (VLHILPLLLSWISFWLLYSIV) form a helical membrane-spanning segment. At 201–209 (PTTRVPNRD) the chain is on the cytoplasmic side. The helical transmembrane segment at 210-230 (ALVGAFVAALLFEAGKKGFAL) threads the bilayer. Over 231–243 (YITMFPSYQLIYG) the chain is Periplasmic. Residues 244-264 (VLAVIPILFVWVYWTWCIVLL) form a helical membrane-spanning segment. At 265–290 (GAEITVTLGEYRKLKQAAEQEEADQP) the chain is on the cytoplasmic side.

Belongs to the UPF0761 family.

The protein resides in the cell inner membrane. This is UPF0761 membrane protein YihY from Salmonella typhimurium (strain LT2 / SGSC1412 / ATCC 700720).